A 124-amino-acid chain; its full sequence is Small ribosomal subunit protein uS12 (124 aa).

Residue Asp-89 is modified to 3-methylthioaspartic acid. Lys-108 bears the N6-acetyllysine mark.

This sequence belongs to the universal ribosomal protein uS12 family. Part of the 30S ribosomal subunit. Contacts proteins S8 and S17. May interact with IF1 in the 30S initiation complex.

In terms of biological role, with S4 and S5 plays an important role in translational accuracy. Interacts with and stabilizes bases of the 16S rRNA that are involved in tRNA selection in the A site and with the mRNA backbone. Located at the interface of the 30S and 50S subunits, it traverses the body of the 30S subunit contacting proteins on the other side and probably holding the rRNA structure together. The combined cluster of proteins S8, S12 and S17 appears to hold together the shoulder and platform of the 30S subunit. This is Small ribosomal subunit protein uS12 from Escherichia coli O139:H28 (strain E24377A / ETEC).